A 141-amino-acid polypeptide reads, in one-letter code: Hemoglobin subunit alpha-2 (141 aa).

Residues 1 to 141 enclose the Globin domain; that stretch reads VLSEGNKKII…VTYQLSSLYR (141 aa). Residue H59 coordinates O2. H88 contacts heme b.

It belongs to the globin family. In terms of assembly, heterotetramer of two alpha chains and two beta chains. As to expression, red blood cells.

In terms of biological role, involved in oxygen transport from the lung to the various peripheral tissues. This Torpedo marmorata (Marbled electric ray) protein is Hemoglobin subunit alpha-2.